The chain runs to 78 residues: Large ribosomal subunit protein bL28 (78 aa).

The tract at residues 1–20 (MSRVCQVTGKGPVTGNNISH) is disordered.

It belongs to the bacterial ribosomal protein bL28 family.

The sequence is that of Large ribosomal subunit protein bL28 from Pseudomonas fluorescens (strain ATCC BAA-477 / NRRL B-23932 / Pf-5).